A 151-amino-acid chain; its full sequence is Phosphopantetheine adenylyltransferase (151 aa).

Thr9 is a binding site for substrate. Residues 9–10 (TF) and His17 contribute to the ATP site. The substrate site is built by Lys41, Thr73, and Arg87. Residues 88 to 90 (GIR), Glu98, and 122 to 128 (LTSISST) contribute to the ATP site.

The protein belongs to the bacterial CoaD family. Homohexamer. Requires Mg(2+) as cofactor.

It is found in the cytoplasm. The catalysed reaction is (R)-4'-phosphopantetheine + ATP + H(+) = 3'-dephospho-CoA + diphosphate. It functions in the pathway cofactor biosynthesis; coenzyme A biosynthesis; CoA from (R)-pantothenate: step 4/5. Reversibly transfers an adenylyl group from ATP to 4'-phosphopantetheine, yielding dephospho-CoA (dPCoA) and pyrophosphate. The polypeptide is Phosphopantetheine adenylyltransferase (Phocaeicola vulgatus (strain ATCC 8482 / DSM 1447 / JCM 5826 / CCUG 4940 / NBRC 14291 / NCTC 11154) (Bacteroides vulgatus)).